The primary structure comprises 194 residues: Orotate phosphoribosyltransferase (194 aa).

Glu-114–Ser-122 serves as a coordination point for 5-phospho-alpha-D-ribose 1-diphosphate. Positions 118 and 146 each coordinate orotate.

This sequence belongs to the purine/pyrimidine phosphoribosyltransferase family. PyrE subfamily. In terms of assembly, homodimer. Mg(2+) serves as cofactor.

It catalyses the reaction orotidine 5'-phosphate + diphosphate = orotate + 5-phospho-alpha-D-ribose 1-diphosphate. Its pathway is pyrimidine metabolism; UMP biosynthesis via de novo pathway; UMP from orotate: step 1/2. In terms of biological role, catalyzes the transfer of a ribosyl phosphate group from 5-phosphoribose 1-diphosphate to orotate, leading to the formation of orotidine monophosphate (OMP). The polypeptide is Orotate phosphoribosyltransferase (Clostridioides difficile (strain 630) (Peptoclostridium difficile)).